The following is a 310-amino-acid chain: Upstream stimulatory factor 1 (310 aa).

Positions 1–17 are enriched in polar residues; sequence MKGQQKTAETEEGTVQI. Disordered regions lie at residues 1 to 26 and 171 to 209; these read MKGQ…ATGE and QGGS…EVER. Residues 190–209 are compositionally biased toward basic and acidic residues; that stretch reads EAPRTTRDEKRRAQHNEVER. One can recognise a bHLH domain in the interval 199–254; that stretch reads KRRAQHNEVERRRRDKINNWIVQLSKIIPDCSMESTKSGQSKGGILSKACDYIQEL. Residues 271 to 292 form a leucine-zipper region; the sequence is LQLDNDVLRQQVEDLKNKNLLL. Lysine 306 is covalently cross-linked (Glycyl lysine isopeptide (Lys-Gly) (interchain with G-Cter in SUMO2)).

As to quaternary structure, efficient DNA binding requires dimerization with another bHLH protein. Binds DNA as a homodimer or a heterodimer (USF1/USF2). Interacts with varicella-zoster virus IE62 protein.

Its subcellular location is the nucleus. Transcription factor that binds to a symmetrical DNA sequence (E-boxes) (5'-CACGTG-3') that is found in a variety of viral and cellular promoters. The protein is Upstream stimulatory factor 1 (USF1) of Homo sapiens (Human).